Consider the following 333-residue polypeptide: Arginase (333 aa).

Methionine 1 is modified (N-acetylmethionine). Serine 16 bears the Phosphoserine mark. The residue at position 77 (threonine 77) is a Phosphothreonine. Residues histidine 123, aspartate 146, histidine 148, and aspartate 150 each contribute to the Mn(2+) site. Residues 148 to 152 (HADIN), 159 to 161 (SGN), and aspartate 205 contribute to the substrate site. Mn(2+) contacts are provided by aspartate 256 and aspartate 258. The residue at position 270 (threonine 270) is a Phosphothreonine. Substrate is bound by residues threonine 270 and glutamate 301.

This sequence belongs to the arginase family. In terms of assembly, homotrimer. Requires Mn(2+) as cofactor.

The enzyme catalyses L-arginine + H2O = urea + L-ornithine. The protein operates within nitrogen metabolism; urea cycle; L-ornithine and urea from L-arginine: step 1/1. The protein is Arginase (CAR1) of Saccharomyces cerevisiae (strain ATCC 204508 / S288c) (Baker's yeast).